Consider the following 463-residue polypeptide: Dopaminechrome tautomerase (463 aa).

It belongs to the major royal jelly protein family.

The protein resides in the secreted. The catalysed reaction is dopaminechrome = 5,6-dihydroxyindole. It participates in pigment biosynthesis; melanin biosynthesis. In terms of biological role, catalyzes the conversion of dopaminechrome to 5,6-dihydroxyindole in the eumelanin biosynthetic pathway originating from dopamine. Catalyzes tautomerization of dopaminechrome to 5,6-dihydroxyindole during eumelanin biosynthesis. Acts both dopaminechrome and N-methyl dopaminechrome but not on dopachrome or other aminochromes tested. The chain is Dopaminechrome tautomerase from Drosophila melanogaster (Fruit fly).